The chain runs to 607 residues: Autophagy-related protein 22-2 (607 aa).

The interval 9 to 31 (FQSPSPDEGVQQRPPRYVGEDTT) is disordered. A helical transmembrane segment spans residues 44-64 (YGIAAEVFAVCGVGSFLPLTL). N88 and N91 each carry an N-linked (GlcNAc...) asparagine glycan. The next 3 helical transmembrane spans lie at 111-131 (SFAM…LISF), 143-160 (TLLM…MLFV), and 161-178 (FIAP…VVGV). The disordered stretch occupies residues 203–263 (QEGKADDGTE…GMGTKAPLSS (61 aa)). The N-linked (GlcNAc...) asparagine glycan is linked to N235. 8 helical membrane passes run 277–297 (GIGL…IMLL), 310–330 (TLPM…FTLV), 381–401 (VLIF…VSGT), 415–435 (PLIG…AFLW), 450–470 (IILC…AYIP), 484–504 (WEIF…ASYC), 521–543 (YALY…GGIV), and 552–572 (GFFF…MVNA). Residues 585-607 (TLGKSHGGPAEDAQEAEGLLARE) are disordered.

This sequence belongs to the ATG22 family.

It is found in the vacuole membrane. Its function is as follows. Vacuolar effluxer which mediate the efflux of amino acids resulting from autophagic degradation. The release of autophagic amino acids allows the maintenance of protein synthesis and viability during nitrogen starvation. This chain is Autophagy-related protein 22-2 (atg22-2), found in Penicillium rubens (strain ATCC 28089 / DSM 1075 / NRRL 1951 / Wisconsin 54-1255) (Penicillium chrysogenum).